A 643-amino-acid chain; its full sequence is Macrolide export ATP-binding/permease protein MacB (643 aa).

The ABC transporter domain occupies 4-242 (IEIKELNRYF…VNNQSKAKSR (239 aa)). Position 40–47 (40–47 (GQSGSGKS)) interacts with ATP. 4 helical membrane-spanning segments follow: residues 269–289 (LLTM…VALG), 523–543 (IAFI…LVSV), 572–592 (ILIC…IGGI), and 603–623 (VFST…GVIF).

Belongs to the ABC transporter superfamily. Macrolide exporter (TC 3.A.1.122) family. In terms of assembly, homodimer. Part of the tripartite efflux system MacAB-TolC, which is composed of an inner membrane transporter, MacB, a periplasmic membrane fusion protein, MacA, and an outer membrane component, TolC. The complex forms a large protein conduit and can translocate molecules across both the inner and outer membranes. Interacts with MacA.

It is found in the cell inner membrane. Its function is as follows. Part of the tripartite efflux system MacAB-TolC. MacB is a non-canonical ABC transporter that contains transmembrane domains (TMD), which form a pore in the inner membrane, and an ATP-binding domain (NBD), which is responsible for energy generation. Confers resistance against macrolides. This Mannheimia succiniciproducens (strain KCTC 0769BP / MBEL55E) protein is Macrolide export ATP-binding/permease protein MacB.